Reading from the N-terminus, the 342-residue chain is L-threonine 3-dehydrogenase (342 aa).

Cys38 contributes to the Zn(2+) binding site. Catalysis depends on charge relay system residues Thr40 and His43. Zn(2+) contacts are provided by His63, Glu64, Cys93, Cys96, Cys99, and Cys107. NAD(+) contacts are provided by residues Ile175, Asp195, Arg200, 262 to 264 (LGI), and 286 to 287 (IY).

This sequence belongs to the zinc-containing alcohol dehydrogenase family. Homotetramer. Zn(2+) is required as a cofactor.

The protein localises to the cytoplasm. It carries out the reaction L-threonine + NAD(+) = (2S)-2-amino-3-oxobutanoate + NADH + H(+). Its pathway is amino-acid degradation; L-threonine degradation via oxydo-reductase pathway; glycine from L-threonine: step 1/2. In terms of biological role, catalyzes the NAD(+)-dependent oxidation of L-threonine to 2-amino-3-ketobutyrate. The protein is L-threonine 3-dehydrogenase of Burkholderia cenocepacia (strain ATCC BAA-245 / DSM 16553 / LMG 16656 / NCTC 13227 / J2315 / CF5610) (Burkholderia cepacia (strain J2315)).